The primary structure comprises 720 residues: Ciliated left-right organizer metallopeptidase (720 aa).

Residues 1–25 form the signal peptide; sequence MTVSFSMFQIYRLVWLSFMTSMCLS. Residues 26-668 lie on the Extracellular side of the membrane; that stretch reads ACIHDSVLQE…ALYVSHMLYS (643 aa). Position 243 (His243) interacts with Zn(2+). Glu244 is a catalytic residue. Residues His247 and His322 each contribute to the Zn(2+) site. Residues 669–689 form a helical membrane-spanning segment; the sequence is YVIGGGCCAVCGAAIIFALFW. The Cytoplasmic portion of the chain corresponds to 690–720; sequence YKLRRQFLRVGSSYPPETSNHERPQIPADLV.

This sequence belongs to the peptidase M8 family. Zn(2+) is required as a cofactor.

The protein resides in the membrane. Its function is as follows. Putative metalloprotease playing a role in the process of LR patterning. The polypeptide is Ciliated left-right organizer metallopeptidase (cirop) (Xenopus laevis (African clawed frog)).